Here is a 318-residue protein sequence, read N- to C-terminus: Methionyl-tRNA formyltransferase (318 aa).

Position 112–115 (112–115 (SILP)) interacts with (6S)-5,6,7,8-tetrahydrofolate.

It belongs to the Fmt family.

The catalysed reaction is L-methionyl-tRNA(fMet) + (6R)-10-formyltetrahydrofolate = N-formyl-L-methionyl-tRNA(fMet) + (6S)-5,6,7,8-tetrahydrofolate + H(+). Functionally, attaches a formyl group to the free amino group of methionyl-tRNA(fMet). The formyl group appears to play a dual role in the initiator identity of N-formylmethionyl-tRNA by promoting its recognition by IF2 and preventing the misappropriation of this tRNA by the elongation apparatus. In Shewanella frigidimarina (strain NCIMB 400), this protein is Methionyl-tRNA formyltransferase.